Consider the following 384-residue polypeptide: Putative glutamate--cysteine ligase 2-1 (384 aa).

Belongs to the glutamate--cysteine ligase type 2 family. YbdK subfamily.

The catalysed reaction is L-cysteine + L-glutamate + ATP = gamma-L-glutamyl-L-cysteine + ADP + phosphate + H(+). Its function is as follows. ATP-dependent carboxylate-amine ligase which exhibits weak glutamate--cysteine ligase activity. This is Putative glutamate--cysteine ligase 2-1 from Paenarthrobacter aurescens (strain TC1).